Here is a 278-residue protein sequence, read N- to C-terminus: ATP synthase subunit delta (278 aa).

The protein belongs to the ATPase delta chain family. As to quaternary structure, F-type ATPases have 2 components, F(1) - the catalytic core - and F(0) - the membrane proton channel. F(1) has five subunits: alpha(3), beta(3), gamma(1), delta(1), epsilon(1). F(0) has three main subunits: a(1), b(2) and c(10-14). The alpha and beta chains form an alternating ring which encloses part of the gamma chain. F(1) is attached to F(0) by a central stalk formed by the gamma and epsilon chains, while a peripheral stalk is formed by the delta and b chains.

The protein resides in the cell membrane. Functionally, f(1)F(0) ATP synthase produces ATP from ADP in the presence of a proton or sodium gradient. F-type ATPases consist of two structural domains, F(1) containing the extramembraneous catalytic core and F(0) containing the membrane proton channel, linked together by a central stalk and a peripheral stalk. During catalysis, ATP synthesis in the catalytic domain of F(1) is coupled via a rotary mechanism of the central stalk subunits to proton translocation. Its function is as follows. This protein is part of the stalk that links CF(0) to CF(1). It either transmits conformational changes from CF(0) to CF(1) or is implicated in proton conduction. The chain is ATP synthase subunit delta from Rhodococcus opacus (strain B4).